Here is an 843-residue protein sequence, read N- to C-terminus: Protein P (843 aa).

Residues 1–177 (MPLSYQHFRK…FCGSPYSWEQ (177 aa)) form a terminal protein domain (TP) region. Residues 178–346 (ELQHGRLVFQ…YCLTHIVNLL (169 aa)) form a spacer region. Disordered stretches follow at residues 220–273 (QSRL…SSTS) and 289–316 (LSTS…RSQS). Positions 289–299 (LSTSKRQSSSG) are enriched in polar residues. Residues 347-690 (EDWGPCTEHG…YLNLYPVARQ (344 aa)) form a polymerase/reverse transcriptase domain (RT) region. One can recognise a Reverse transcriptase domain in the interval 357-600 (EHNIRIPRTP…YSLNFMGYVI (244 aa)). D429, D551, and D552 together coordinate Mg(2+).

It belongs to the hepadnaviridae P protein family.

The catalysed reaction is DNA(n) + a 2'-deoxyribonucleoside 5'-triphosphate = DNA(n+1) + diphosphate. The enzyme catalyses Endonucleolytic cleavage to 5'-phosphomonoester.. Its activity is regulated as follows. Activated by host HSP70 and HSP40 in vitro to be able to bind the epsilon loop of the pgRNA. Because deletion of the RNase H region renders the protein partly chaperone-independent, the chaperones may be needed indirectly to relieve occlusion of the RNA-binding site by this domain. Inhibited by several reverse-transcriptase inhibitors: Lamivudine, Adefovir and Entecavir. Its function is as follows. Multifunctional enzyme that converts the viral RNA genome into dsDNA in viral cytoplasmic capsids. This enzyme displays a DNA polymerase activity that can copy either DNA or RNA templates, and a ribonuclease H (RNase H) activity that cleaves the RNA strand of RNA-DNA heteroduplexes in a partially processive 3'- to 5'-endonucleasic mode. Neo-synthesized pregenomic RNA (pgRNA) are encapsidated together with the P protein, and reverse-transcribed inside the nucleocapsid. Initiation of reverse-transcription occurs first by binding the epsilon loop on the pgRNA genome, and is initiated by protein priming, thereby the 5'-end of (-)DNA is covalently linked to P protein. Partial (+)DNA is synthesized from the (-)DNA template and generates the relaxed circular DNA (RC-DNA) genome. After budding and infection, the RC-DNA migrates in the nucleus, and is converted into a plasmid-like covalently closed circular DNA (cccDNA). The activity of P protein does not seem to be necessary for cccDNA generation, and is presumably released from (+)DNA by host nuclear DNA repair machinery. The polypeptide is Protein P (Hepatitis B virus genotype C subtype ad (isolate Japan/S-179/1988) (HBV-C)).